Reading from the N-terminus, the 448-residue chain is Methionine aminopeptidase 2 (448 aa).

The disordered stretch occupies residues 1–47; the sequence is MTSSVDKVSQKVADVKLGSSKSTKNNKSKGKGKSNKNQVVEDDDEDD. A compositionally biased stretch (basic residues) spans 24-34; sequence KNNKSKGKGKS. His198 provides a ligand contact to substrate. Residues Asp218, Asp229, and His298 each coordinate a divalent metal cation. Residue His306 participates in substrate binding. The a divalent metal cation site is built by Glu331 and Glu429.

It belongs to the peptidase M24A family. Methionine aminopeptidase eukaryotic type 2 subfamily. Co(2+) is required as a cofactor. It depends on Zn(2+) as a cofactor. The cofactor is Mn(2+). Fe(2+) serves as cofactor.

The protein localises to the cytoplasm. The enzyme catalyses Release of N-terminal amino acids, preferentially methionine, from peptides and arylamides.. Functionally, cotranslationally removes the N-terminal methionine from nascent proteins. The N-terminal methionine is often cleaved when the second residue in the primary sequence is small and uncharged (Met-Ala-, Cys, Gly, Pro, Ser, Thr, or Val). The protein is Methionine aminopeptidase 2 of Komagataella phaffii (strain GS115 / ATCC 20864) (Yeast).